The primary structure comprises 237 residues: Demethylmenaquinone methyltransferase (237 aa).

S-adenosyl-L-methionine contacts are provided by residues threonine 58, aspartate 79, and 106–107 (NA).

This sequence belongs to the class I-like SAM-binding methyltransferase superfamily. MenG/UbiE family.

The catalysed reaction is a 2-demethylmenaquinol + S-adenosyl-L-methionine = a menaquinol + S-adenosyl-L-homocysteine + H(+). It functions in the pathway quinol/quinone metabolism; menaquinone biosynthesis; menaquinol from 1,4-dihydroxy-2-naphthoate: step 2/2. Functionally, methyltransferase required for the conversion of demethylmenaquinol (DMKH2) to menaquinol (MKH2). The protein is Demethylmenaquinone methyltransferase of Bacillus cytotoxicus (strain DSM 22905 / CIP 110041 / 391-98 / NVH 391-98).